Here is a 1196-residue protein sequence, read N- to C-terminus: MNTDSGGCARKRAAMSVTLTSVKRVQSSPNLLAAGRESHSPDSAWRSYNGRNPETLNGDATYSSLAAKGFRSVRPNLQDKKSPTQSHITINGNSGGAVSPVSYYQRPFSPSAYSLPASLNSSIIMPHGRSLDSAETYSQHAQSLDGTMGSSIPLYRSSEEEKRVTVIKAPHYPGIGPVDESGIPTAIRTTVDRPKDWYKTMFKQIHMVHKPDEDTDMYNTPYTYNAGLYNSPYSAQSHPAAKTQTYRPLSKSHSDNGTDAFKEATSPVPPPHVPPRPRDQSSTEKHDWDPPDRKVDTRKFRSEPRSIFEYEPGKSSILQHERPVSVYQSSIDRSLERPSSSASMAGDFRKRRKSEPAVGPPRGLGDHSSSRTSPGRADLPGSSSTFTTSFISSSPSSPSRAQGGDDSKMCPPLCSYSGLNGSPSSELECCGAYRRHLDVPQDSQRAITFKNGWQMARQNAEIWSSTEEAVSPKIKSRSCDDLLNDDCGSFPDPKTKSESMGSLLCDEGSKESDPMTWTSPYIPEVCGNSRSRLKHRSAHNAPGFLKMYKKMHRINRKDLMNSEVICSVKSRILQYEKEQQHRGLLHGWSQSSTEEVPRDVVPTRISEFEKLIQKSKSMPNLGDEMLSPVTLEPPQNGLCPKRRFSIESLLEEETQVRHPSQGQRSCKSNTLVPIHIEVTSDEQPRTHMEFSDSDQDGVVSDHSDNVHVERSSFCSESDFDHFSFTSSESFYGSSHHHHHHHHHHGHFISSCKGRCPASYTRFTTMLKHERAKHENIDRPRRQDMDPGLSKLAFLVSPVPFRRKKVLTPQKQTEQAKCKASVVEALDSALKDICDQIKAEKRRGSLPDNSILHRLISELLPQIPKRNSSLNALKRSPMHQPFHPLPQDGAIHCPLYQNDCGRMPHSASFPDVDTTSSYHAQDYGSVLSLQDHESPRSYSSTLTDLGRSVSRERRGTPEKEVKLPAKAVYDFKAQTSKELSFKKGDTVYILRKIDQNWYEGEHHGRVGIFPISYVEKLTPPEKAQPARPPPPVQPGEIGEAIAKYNFNADTNVELSLRKGDRIILLKRVDQNWYEGKIPGTNRQGIFPVSYVEVVKRNTKGSEDYPDPPLPHSYSSDRIYSLSSNKPQRPVFSHENIQGGGEPFQALYNYTPRNEDELELRESDVVDVMEKCDDGWFVGTSRRTKFFGTFPGNYVKRL.

Disordered regions lie at residues Val25–Asn57 and Pro75–Gly95. 3 positions are modified to phosphoserine: Ser27, Ser28, and Ser40. Polar residues predominate over residues Pro83–Gly92. Ser130 and Ser143 each carry phosphoserine. The residue at position 148 (Met148) is an Alanine amide. The SoHo domain occupies Val166–Gly227. Residues Ala235–Arg247 show a composition bias toward polar residues. Disordered stretches follow at residues Ala235–Lys314 and Ser329–Ser407. Basic and acidic residues-rich tracts occupy residues Ser252–Lys262 and Arg276–Pro312. A Phosphoserine modification is found at Ser254. Polar residues predominate over residues Ser329–Ser343. Phosphoserine is present on residues Ser334, Ser340, Ser343, and Ser354. Thr372 bears the Phosphothreonine mark. A Phosphoserine modification is found at Ser382. Residues Ser382–Ser399 show a composition bias toward low complexity. Phosphothreonine is present on Thr387. Phosphoserine occurs at positions 392, 393, 394, 396, 397, 399, 478, 589, 592, 645, 648, 844, and 938. A disordered region spans residues Gln929 to Lys958. The segment covering Val948–Lys958 has biased composition (basic and acidic residues). 2 SH3 domains span residues Glu959 to Pro1018 and Gly1034 to Arg1095. Phosphoserine occurs at positions 1113 and 1119. Residues Gly1137–Leu1196 enclose the SH3 3 domain.

In terms of assembly, interacts with ABL1/c-Abl, ABL2/v-Abl/Arg, ACTN, CBL and PALLD. Interacts with ABL, CBL, DNM1, DNM2, FLOT1, AFDN, PTK2B/PYK2, SAPAP, SPTAN1, SYNJ1, SYNJ2, VCL/vinculin and WASF. Interacts with PTPN12 and WASF1 via its SH3 domains; this interaction may mediate the partial PTPN12 and WASF1 translocation to focal adhesion sites. Post-translationally, ubiquitinated by CBL. Expressed in brain; found in synapses in cerebellum.

The protein resides in the cytoplasm. Its subcellular location is the perinuclear region. It is found in the apical cell membrane. It localises to the cell junction. The protein localises to the focal adhesion. The protein resides in the cell projection. Its subcellular location is the lamellipodium. In terms of biological role, adapter protein that plays a role in the assembling of signaling complexes, being a link between ABL kinases and actin cytoskeleton. Can form complex with ABL1 and CBL, thus promoting ubiquitination and degradation of ABL1. May play a role in the regulation of pancreatic cell adhesion, possibly by acting on WASF1 phosphorylation, enhancing phosphorylation by ABL1, as well as dephosphorylation by PTPN12. Isoform 2 increases water and sodium absorption in the intestine and gall-bladder. The polypeptide is Sorbin and SH3 domain-containing protein 2 (Sorbs2) (Rattus norvegicus (Rat)).